The sequence spans 188 residues: Probable manganese efflux pump MntP (188 aa).

6 consecutive transmembrane segments (helical) span residues 3 to 23, 41 to 61, 66 to 86, 106 to 128, 143 to 163, and 168 to 188; these read YTAT…ASIG, LIFG…GILA, LEWN…RMII, WLLV…GLAF, ATLI…PMLG, and ILGG…HFHG.

This sequence belongs to the MntP (TC 9.B.29) family.

The protein localises to the cell inner membrane. In terms of biological role, probably functions as a manganese efflux pump. This chain is Probable manganese efflux pump MntP, found in Salmonella heidelberg (strain SL476).